The following is a 1067-amino-acid chain: MSWLRSSPLRQSGNGGGGGVSTGHSSTGSLRQRPIDAATDCDPRACYDSFCKHWQQAYDIIQHYAPPTHDDVLGVVSHLDYMVTLLLVELHHCNKVSLPSTDASAAPAAPCLEYLLSENLLDKLYEWACTTGRYANAVRLEQLKLYELLVSHSRHQLLCHEPFLRPLLKILASSQGEIFPPDLEKRLVILLNQLCVVLMQNVHLLDLFFFSAQTQVQEQIQNGNVPPPKSGTTTNFIIFSLLIPYVHREGSLGHQARDALLLCMALSQKNSNIGTYIAQYSSICPLLVTGLGGLYSRLPNSIEISSIDWHRITPDDVTEIPELTLFMNALEFCNAVVQVAHEMIKQQLLDFMYQGFIVPVLGPAVLQTLKGKHFQTNIDSQISAMSYLDLILRSITEPGLLRAFVKFLLDTEKFDGERILDSLVERLNSPDANLCMVTMALFDTLLGLHCEDLMLELLLKFMLPGKHVPISHRHKINKIDPYLNSSDFFLELSPDVLKRARDLARPKSVHEQQPPSGATGEQPIQPLAWPSLPSPVMSKTIGANWNYYGLHTGDSLYANLQAYLFEAHWRIAQCQRDCLKWANSYRYQKWPRHGQARVHAHALELARQFFSEFGGGPPAIASESAGEKQLDSLQSIGESSGYESFKWRPADEESDATDLTVTTTTTTASEADLEHNSSSISSGMGGGGGAAAGRRGEAWRISHTNRNELLLTDLDFSEDLFAQGTVSLGPFLNAIWGKLQTFTSNSLYVNLHLTGLITRLAWYPLPLIHSLLLRSDIAITSDTPSFHQVLRILKQQIDAELPVTEDSLEIIDVARSSLIDREFRLVNARKGNENSPLHHHQQPQTTLSQQQQQQQGQQRSAYATLSAATPVQATQTSAYDPFKRSDNKRKSISKSISSMFSRRSTPNPPSSAGAASTLVGNNNSGSGQSQPFSSTGTGTCETSLSTNPQSGAAAARSTGTATTANGNSSNSNISIGGSTQTLSGHSNTTTYSSSTLHGLDGGPQTGSFNSEPASLDSVASMGIIASTSGTERTRDVALCAVLLDEWLKELAAIAQEQSVVLVTDQLL.

Positions 1-11 are enriched in polar residues; that stretch reads MSWLRSSPLRQ. Disordered regions lie at residues 1–31, 503–525, and 832–1013; these read MSWL…GSLR, LARP…QPIQ, and NENS…SEPA. A phosphoserine mark is found at Ser508 and Ser835. Over residues 842–858 the composition is skewed to low complexity; the sequence is QPQTTLSQQQQQQQGQQ. Residues 859–878 are compositionally biased toward polar residues; the sequence is RSAYATLSAATPVQATQTSA. A compositionally biased stretch (low complexity) spans 893 to 904; the sequence is SKSISSMFSRRS. Residues 918 to 949 show a composition bias toward polar residues; sequence LVGNNNSGSGQSQPFSSTGTGTCETSLSTNPQ. Low complexity predominate over residues 950–979; sequence SGAAAARSTGTATTANGNSSNSNISIGGST. A compositionally biased stretch (polar residues) spans 980-996; it reads QTLSGHSNTTTYSSSTL.

This sequence belongs to the FHIP family.

The polypeptide is FHIP family protein GL19323 (Drosophila persimilis (Fruit fly)).